The sequence spans 417 residues: Putative nickel insertion protein (417 aa).

Positions 69–99 are disordered; the sequence is HEHHHDHGHHHHGHGHHHDHTHDHHHHHEHR. Residues 74–99 are compositionally biased toward basic residues; the sequence is DHGHHHHGHGHHHDHTHDHHHHHEHR.

This sequence belongs to the LarC family.

The protein is Putative nickel insertion protein of Maridesulfovibrio salexigens (strain ATCC 14822 / DSM 2638 / NCIMB 8403 / VKM B-1763) (Desulfovibrio salexigens).